The chain runs to 173 residues: ATP synthase subunit b (173 aa).

A helical transmembrane segment spans residues 12–32 (LDVNPGLVVWTLITFLVVVLV).

This sequence belongs to the ATPase B chain family. As to quaternary structure, F-type ATPases have 2 components, F(1) - the catalytic core - and F(0) - the membrane proton channel. F(1) has five subunits: alpha(3), beta(3), gamma(1), delta(1), epsilon(1). F(0) has three main subunits: a(1), b(2) and c(10-14). The alpha and beta chains form an alternating ring which encloses part of the gamma chain. F(1) is attached to F(0) by a central stalk formed by the gamma and epsilon chains, while a peripheral stalk is formed by the delta and b chains.

The protein localises to the cell inner membrane. In terms of biological role, f(1)F(0) ATP synthase produces ATP from ADP in the presence of a proton or sodium gradient. F-type ATPases consist of two structural domains, F(1) containing the extramembraneous catalytic core and F(0) containing the membrane proton channel, linked together by a central stalk and a peripheral stalk. During catalysis, ATP synthesis in the catalytic domain of F(1) is coupled via a rotary mechanism of the central stalk subunits to proton translocation. Functionally, component of the F(0) channel, it forms part of the peripheral stalk, linking F(1) to F(0). This Leptospira borgpetersenii serovar Hardjo-bovis (strain JB197) protein is ATP synthase subunit b.